We begin with the raw amino-acid sequence, 290 residues long: Elongation factor Ts (290 aa).

The interval 83–86 is involved in Mg(2+) ion dislocation from EF-Tu; that stretch reads TDFV.

This sequence belongs to the EF-Ts family.

It is found in the cytoplasm. Functionally, associates with the EF-Tu.GDP complex and induces the exchange of GDP to GTP. It remains bound to the aminoacyl-tRNA.EF-Tu.GTP complex up to the GTP hydrolysis stage on the ribosome. The sequence is that of Elongation factor Ts (tsf) from Aquifex aeolicus (strain VF5).